Reading from the N-terminus, the 116-residue chain is CDKN2AIP N-terminal-like protein (116 aa).

The residue at position 1 (Met-1) is an N-acetylmethionine. The XRN2-binding (XTBD) domain maps to Ala-24–Ser-116.

The protein belongs to the CARF family. In terms of assembly, interacts with XRN2; the interaction is direct.

The chain is CDKN2AIP N-terminal-like protein (CDKN2AIPNL) from Homo sapiens (Human).